The sequence spans 122 residues: Small ribosomal subunit protein uS13 (122 aa).

A disordered region spans residues 99–122 (RGQRTHTNARTRKGPAKAIAGKKK).

The protein belongs to the universal ribosomal protein uS13 family. Part of the 30S ribosomal subunit. Forms a loose heterodimer with protein S19. Forms two bridges to the 50S subunit in the 70S ribosome.

Functionally, located at the top of the head of the 30S subunit, it contacts several helices of the 16S rRNA. In the 70S ribosome it contacts the 23S rRNA (bridge B1a) and protein L5 of the 50S subunit (bridge B1b), connecting the 2 subunits; these bridges are implicated in subunit movement. Contacts the tRNAs in the A and P-sites. The chain is Small ribosomal subunit protein uS13 from Parvibaculum lavamentivorans (strain DS-1 / DSM 13023 / NCIMB 13966).